Consider the following 235-residue polypeptide: Aspartate/glutamate leucyltransferase (235 aa).

Belongs to the R-transferase family. Bpt subfamily.

Its subcellular location is the cytoplasm. It catalyses the reaction N-terminal L-glutamyl-[protein] + L-leucyl-tRNA(Leu) = N-terminal L-leucyl-L-glutamyl-[protein] + tRNA(Leu) + H(+). The catalysed reaction is N-terminal L-aspartyl-[protein] + L-leucyl-tRNA(Leu) = N-terminal L-leucyl-L-aspartyl-[protein] + tRNA(Leu) + H(+). Its function is as follows. Functions in the N-end rule pathway of protein degradation where it conjugates Leu from its aminoacyl-tRNA to the N-termini of proteins containing an N-terminal aspartate or glutamate. This chain is Aspartate/glutamate leucyltransferase, found in Pseudomonas fluorescens (strain Pf0-1).